A 143-amino-acid polypeptide reads, in one-letter code: Large ribosomal subunit protein uL13 (143 aa).

Belongs to the universal ribosomal protein uL13 family. In terms of assembly, part of the 50S ribosomal subunit.

In terms of biological role, this protein is one of the early assembly proteins of the 50S ribosomal subunit, although it is not seen to bind rRNA by itself. It is important during the early stages of 50S assembly. The protein is Large ribosomal subunit protein uL13 of Desulfitobacterium hafniense (strain Y51).